We begin with the raw amino-acid sequence, 189 residues long: MALTFYLLVALVVLSYKSFSSLGCDLPQTHSLGNRRALILLAQMRRISPFSCLKDRHDFEFPQEEFDDKQFQKAQAISVLHEMIQQTFNLFSTKDSSAALDETLLDEFYIELDQQLNDLESCVMQEVGVIESPLMYEDSILAVRKYFQRITLYLTEKKYSSCAWEVVRAEIMRSFSLSINLQKRLKSKE.

The N-terminal stretch at 1–23 (MALTFYLLVALVVLSYKSFSSLG) is a signal peptide. 2 disulfides stabilise this stretch: C24-C122 and C52-C162.

It belongs to the alpha/beta interferon family.

It localises to the secreted. Its function is as follows. Produced by macrophages, IFN-alpha have antiviral activities. Interferon stimulates the production of two enzymes: a protein kinase and an oligoadenylate synthetase. The protein is Interferon alpha-8 (IFNA8) of Homo sapiens (Human).